The primary structure comprises 412 residues: Na(+)/H(+) antiporter NhaA 1 (412 aa).

10 consecutive transmembrane segments (helical) span residues 34 to 54 (VGGM…NSPA), 75 to 95 (LTIG…VAGL), 114 to 134 (LPVV…FAIG), 142 to 162 (AAWA…LSLT), 183 to 203 (LGAI…LALL), 234 to 254 (WIAV…LGLL), 282 to 302 (LIVP…EALV), 309 to 329 (VAIA…FGSS), 349 to 369 (LSAL…IAEL), and 379 to 399 (AKAA…VMLL).

The protein belongs to the NhaA Na(+)/H(+) (TC 2.A.33) antiporter family.

Its subcellular location is the cell membrane. It carries out the reaction Na(+)(in) + 2 H(+)(out) = Na(+)(out) + 2 H(+)(in). Functionally, na(+)/H(+) antiporter that extrudes sodium in exchange for external protons. The sequence is that of Na(+)/H(+) antiporter NhaA 1 from Saccharopolyspora erythraea (strain ATCC 11635 / DSM 40517 / JCM 4748 / NBRC 13426 / NCIMB 8594 / NRRL 2338).